We begin with the raw amino-acid sequence, 261 residues long: MDWGTLHTVIGGVNKHSTSIGKVWITVIFIFRVMILVVAAQEVWGDEQEDFVCNTLQPGCKNVCYDHFFPVSHIRLWALQLIFVSTPALLVAMHVAYYRHETARKFIRGEKRNEFKDLEDIKRQKVRIEGSLWWTYTSSIFFRIIFEAAFMYVFYFLYNGYHLPWVLKCGIDPCPNLVDCFISRPTEKTVFTVFMISASVICMLLNVAELCYLLLKLCFRRSKRTQAQRNHPNHALKESKQNEMNELISDSGQNAITSFPS.

Topologically, residues 1-22 (MDWGTLHTVIGGVNKHSTSIGK) are cytoplasmic. A helical membrane pass occupies residues 23-45 (VWITVIFIFRVMILVVAAQEVWG). At 46–75 (DEQEDFVCNTLQPGCKNVCYDHFFPVSHIR) the chain is on the extracellular side. The chain crosses the membrane as a helical span at residues 76–98 (LWALQLIFVSTPALLVAMHVAYY). Over 99–131 (RHETARKFIRGEKRNEFKDLEDIKRQKVRIEGS) the chain is Cytoplasmic. The chain crosses the membrane as a helical span at residues 132 to 154 (LWWTYTSSIFFRIIFEAAFMYVF). Topologically, residues 155–192 (YFLYNGYHLPWVLKCGIDPCPNLVDCFISRPTEKTVFT) are extracellular. The helical transmembrane segment at 193–215 (VFMISASVICMLLNVAELCYLLL) threads the bilayer. The Cytoplasmic segment spans residues 216 to 261 (KLCFRRSKRTQAQRNHPNHALKESKQNEMNELISDSGQNAITSFPS).

This sequence belongs to the connexin family. Beta-type (group I) subfamily. In terms of assembly, a connexon is composed of a hexamer of connexins. Interacts with CNST. Highly expressed in adult brain and skin. Less in uterus, lung and eye. Very low in testis and sciatic nerve. No expression before birth.

It localises to the cell membrane. The protein resides in the cell junction. The protein localises to the gap junction. One gap junction consists of a cluster of closely packed pairs of transmembrane channels, the connexons, through which materials of low MW diffuse from one cell to a neighboring cell. In Mus musculus (Mouse), this protein is Gap junction beta-6 protein (Gjb6).